The primary structure comprises 346 residues: MAEITAKLVKELREKSGAGVMDAKKALVETDGDLDKAIELLREKGMAKAAKKADRVAAEGLTGVYVDGNVAAVIEVNAETDFVAKNDQFVTLVNETAKVIAEGRPSNNEEALALTMPSGETLEQAFVTATATIGEKISFRRFALVEKTDEQHFGAYQHNGGRIGVITVVEGGDDALAKQVSMHVAAMKPTVLSYTELDAQFVHDELAQLNHKIEQDNESRAMVNKPALPFLKYGSKAQLTDEVIAQAEEDIKAELAAEGKPEKIWDKIVPGKMDRFMLDNTKVDQEYTLLAQVYIMDDSKTVEAYLESVNAKAVAFVRFEVGEGIEKASNDFEAEVAATMAAALEK.

The tract at residues 80 to 83 (TDFV) is involved in Mg(2+) ion dislocation from EF-Tu.

This sequence belongs to the EF-Ts family.

It localises to the cytoplasm. Functionally, associates with the EF-Tu.GDP complex and induces the exchange of GDP to GTP. It remains bound to the aminoacyl-tRNA.EF-Tu.GTP complex up to the GTP hydrolysis stage on the ribosome. This chain is Elongation factor Ts, found in Streptococcus agalactiae serotype Ia (strain ATCC 27591 / A909 / CDC SS700).